The chain runs to 123 residues: Small ribosomal subunit protein eS8 (123 aa).

Residues 1-37 form a disordered region; that stretch reads MKDQGRSTRKRTGGRLKHASNKKRHQLGREPAETTVG. The segment covering 7-26 has biased composition (basic residues); the sequence is STRKRTGGRLKHASNKKRHQ.

It belongs to the eukaryotic ribosomal protein eS8 family. In terms of assembly, part of the 30S ribosomal subunit.

This chain is Small ribosomal subunit protein eS8, found in Halorubrum lacusprofundi (strain ATCC 49239 / DSM 5036 / JCM 8891 / ACAM 34).